We begin with the raw amino-acid sequence, 837 residues long: Mannosyl-oligosaccharide glucosidase (837 aa).

The span at 1-10 shows a compositional bias: basic residues; it reads MARGERRRRA. Residues 1–38 are Cytoplasmic-facing; it reads MARGERRRRAVPAEGVRTAERAARGGPGRRDGRGGGPR. The segment at 1-39 is disordered; sequence MARGERRRRAVPAEGVRTAERAARGGPGRRDGRGGGPRS. The Endoplasmic reticulum targeting signature appears at 3–9; it reads RGERRRR. Positions 17 to 33 are enriched in basic and acidic residues; the sequence is RTAERAARGGPGRRDGR. Residues 39 to 59 traverse the membrane as a helical; Signal-anchor for type II membrane protein segment; sequence STAGGVALAVVVLSLALGMSG. The Lumenal portion of the chain corresponds to 60–837; the sequence is RWVLAWYRAR…LVLLAMAEDY (778 aa). Residues 76-137 form a required for endoplasmic reticulum targeting region; that stretch reads SAPPVLPADS…PGTPKLRHTC (62 aa). D583 serves as the catalytic Proton donor. The N-linked (GlcNAc...) asparagine glycan is linked to N657. E807 (proton acceptor) is an active-site residue.

The protein belongs to the glycosyl hydrolase 63 family.

The protein resides in the endoplasmic reticulum membrane. The enzyme catalyses N(4)-(alpha-D-Glc-(1-&gt;2)-alpha-D-Glc-(1-&gt;3)-alpha-D-Glc-(1-&gt;3)-alpha-D-Man-(1-&gt;2)-alpha-D-Man-(1-&gt;2)-alpha-D-Man-(1-&gt;3)-[alpha-D-Man-(1-&gt;2)-alpha-D-Man-(1-&gt;3)-[alpha-D-Man-(1-&gt;2)-alpha-D-Man-(1-&gt;6)]-alpha-D-Man-(1-&gt;6)]-beta-D-Man-(1-&gt;4)-beta-D-GlcNAc-(1-&gt;4)-beta-D-GlcNAc)-L-asparaginyl-[protein] + H2O = N(4)-(alpha-D-Glc-(1-&gt;3)-alpha-D-Glc-(1-&gt;3)-alpha-D-Man-(1-&gt;2)-alpha-D-Man-(1-&gt;2)-alpha-D-Man-(1-&gt;3)-[alpha-D-Man-(1-&gt;2)-alpha-D-Man-(1-&gt;3)-[alpha-D-Man-(1-&gt;2)-alpha-D-Man-(1-&gt;6)]-alpha-D-Man-(1-&gt;6)]-beta-D-Man-(1-&gt;4)-beta-D-GlcNAc-(1-&gt;4)-beta-D-GlcNAc)-L-asparaginyl-[protein] + beta-D-glucose. It participates in glycan metabolism; N-glycan degradation. Its activity is regulated as follows. Inhibited by 1-deoxynojirimycin (40% inhibition) and N,N-dimethyl-deoxynojirimycin (85% inhibition). In terms of biological role, in the context of N-glycan degradation, cleaves the distal alpha 1,2-linked glucose residue from the Glc(3)Man(9)GlcNAc(2) oligosaccharide precursor in a highly specific manner. The sequence is that of Mannosyl-oligosaccharide glucosidase from Homo sapiens (Human).